The following is a 1220-amino-acid chain: DNA-directed RNA polymerase subunit beta (1220 aa).

The protein belongs to the RNA polymerase beta chain family. As to quaternary structure, the RNAP catalytic core consists of 2 alpha, 1 beta, 1 beta' and 1 omega subunit. When a sigma factor is associated with the core the holoenzyme is formed, which can initiate transcription.

It carries out the reaction RNA(n) + a ribonucleoside 5'-triphosphate = RNA(n+1) + diphosphate. Functionally, DNA-dependent RNA polymerase catalyzes the transcription of DNA into RNA using the four ribonucleoside triphosphates as substrates. In Mesomycoplasma hyopneumoniae (strain 7448) (Mycoplasma hyopneumoniae), this protein is DNA-directed RNA polymerase subunit beta.